Reading from the N-terminus, the 135-residue chain is Fluoride-specific ion channel FluC 1 (135 aa).

Helical transmembrane passes span 7–27 (LAVG…GLVL), 32–52 (GFPY…PFLM), 65–85 (LALA…SFSV), and 96–116 (WSAF…LSLL). Na(+) is bound by residues glycine 75 and threonine 78.

Belongs to the fluoride channel Fluc/FEX (TC 1.A.43) family.

Its subcellular location is the cell membrane. The catalysed reaction is fluoride(in) = fluoride(out). Na(+) is not transported, but it plays an essential structural role and its presence is essential for fluoride channel function. Functionally, fluoride-specific ion channel. Important for reducing fluoride concentration in the cell, thus reducing its toxicity. This Latilactobacillus sakei subsp. sakei (strain 23K) (Lactobacillus sakei subsp. sakei) protein is Fluoride-specific ion channel FluC 1.